We begin with the raw amino-acid sequence, 313 residues long: MPVAGSELPRRPLPPAAQERDAEPRPPHGELQYLGQIQHILRCGVRKDDRTGTGTLSVFGMQARYSLRDEFPLLTTKRVFWKGVLEELLWFIKGSTNAKELSSKGVKIWDANGSRDFLDSLGFSTREEGDLGPVYGFQWRHFGAEYRDMESDYSGQGVDQLQRVIDTIKTNPDDRRIIMCAWNPRDLPLMALPPCHALCQFYVVNSELSCQLYQRSGDMGLGVPFNIASYALLTYMIAHITGLKPGDFIHTLGDAHIYLNHIEPLKIQLQREPRPFPKLRILRKVEKIDDFKAEDFQIEGYNPHPTIKMEMAV.

The interval 1–28 (MPVAGSELPRRPLPPAAQERDAEPRPPH) is disordered. Positions 18–28 (QERDAEPRPPH) are enriched in basic and acidic residues. DUMP is bound at residue Arg-50. Ser-114 is subject to Phosphoserine. Residues 175-176 (RR), 195-196 (CH), 215-218 (RSGD), Asn-226, and 256-258 (HIY) contribute to the dUMP site. Catalysis depends on Cys-195, which acts as the Nucleophile. Asp-218 contacts (6R)-5,10-methylene-5,6,7,8-tetrahydrofolate. Glycyl lysine isopeptide (Lys-Gly) (interchain with G-Cter in SUMO2) cross-links involve residues Lys-287, Lys-292, and Lys-308. Ala-312 is a (6R)-5,10-methylene-5,6,7,8-tetrahydrofolate binding site.

This sequence belongs to the thymidylate synthase family. Homodimer.

It localises to the nucleus. It is found in the cytoplasm. The protein resides in the mitochondrion. The protein localises to the mitochondrion matrix. Its subcellular location is the mitochondrion inner membrane. It carries out the reaction dUMP + (6R)-5,10-methylene-5,6,7,8-tetrahydrofolate = 7,8-dihydrofolate + dTMP. It participates in pyrimidine metabolism; dTTP biosynthesis. Its function is as follows. Catalyzes the reductive methylation of 2'-deoxyuridine 5'-monophosphate (dUMP) to thymidine 5'-monophosphate (dTMP), using the cosubstrate, 5,10- methylenetetrahydrofolate (CH2H4folate) as a 1-carbon donor and reductant and contributes to the de novo mitochondrial thymidylate biosynthesis pathway. The polypeptide is Thymidylate synthase (Homo sapiens (Human)).